Here is a 71-residue protein sequence, read N- to C-terminus: MSTKKIFEERLQELEAIVTRLENGDVPLEEAISEFQKGMVLSKDLQKTLQAAEKTLVKVMQADGTELEMDA.

This sequence belongs to the XseB family. As to quaternary structure, heterooligomer composed of large and small subunits.

The protein resides in the cytoplasm. The catalysed reaction is Exonucleolytic cleavage in either 5'- to 3'- or 3'- to 5'-direction to yield nucleoside 5'-phosphates.. In terms of biological role, bidirectionally degrades single-stranded DNA into large acid-insoluble oligonucleotides, which are then degraded further into small acid-soluble oligonucleotides. This is Exodeoxyribonuclease 7 small subunit from Streptococcus equi subsp. equi (strain 4047).